Consider the following 334-residue polypeptide: Peroxidase 65 (334 aa).

An N-terminal signal peptide occupies residues 1-28 (MSNMQFSRGFNPFVILFCLAVVAPIISA). Disulfide bonds link C42/C123, C75/C80, C129/C326, and C208/C236. The Proton acceptor role is filled by H73. Residues D74, G79, D81, and S83 each coordinate Ca(2+). Position 171 (P171) interacts with substrate. A glycan (N-linked (GlcNAc...) asparagine) is linked at N174. H201 lines the heme b pocket. T202 contributes to the Ca(2+) binding site. N-linked (GlcNAc...) asparagine glycosylation occurs at N238. 3 residues coordinate Ca(2+): D250, T253, and D258. N-linked (GlcNAc...) asparagine glycosylation is found at N282 and N294.

This sequence belongs to the peroxidase family. Classical plant (class III) peroxidase subfamily. The cofactor is heme b. It depends on Ca(2+) as a cofactor.

It is found in the secreted. It carries out the reaction 2 a phenolic donor + H2O2 = 2 a phenolic radical donor + 2 H2O. In terms of biological role, removal of H(2)O(2), oxidation of toxic reductants, biosynthesis and degradation of lignin, suberization, auxin catabolism, response to environmental stresses such as wounding, pathogen attack and oxidative stress. These functions might be dependent on each isozyme/isoform in each plant tissue. This Arabidopsis thaliana (Mouse-ear cress) protein is Peroxidase 65 (PER65).